Here is a 173-residue protein sequence, read N- to C-terminus: Photosystem I assembly protein Ycf3 (173 aa).

TPR repeat units follow at residues 35-68 (AYIY…EENK), 72-105 (GETL…NPKQ), and 120-153 (GRYA…YPGG).

It belongs to the Ycf3 family.

Its subcellular location is the cellular thylakoid membrane. In terms of biological role, essential for the assembly of the photosystem I (PSI) complex. May act as a chaperone-like factor to guide the assembly of the PSI subunits. In Prochlorococcus marinus (strain MIT 9215), this protein is Photosystem I assembly protein Ycf3.